The primary structure comprises 563 residues: ATP-dependent RNA helicase DeaD (563 aa).

Residues Ala-13–Ala-41 carry the Q motif motif. One can recognise a Helicase ATP-binding domain in the interval Ile-44–Val-215. An ATP-binding site is contributed by Ala-57–Thr-64. The DEAD box signature appears at Asp-163–Asp-166. Residues Asn-226–Asn-385 form the Helicase C-terminal domain. 2 disordered regions span residues Leu-441–Thr-470 and Tyr-543–Gly-563. A compositionally biased stretch (basic and acidic residues) spans Arg-451–Gln-461. Positions Arg-551–Gly-563 are enriched in basic residues.

The protein belongs to the DEAD box helicase family. DeaD/CsdA subfamily.

The protein localises to the cytoplasm. It carries out the reaction ATP + H2O = ADP + phosphate + H(+). Its function is as follows. DEAD-box RNA helicase involved in various cellular processes at low temperature, including ribosome biogenesis, mRNA degradation and translation initiation. The protein is ATP-dependent RNA helicase DeaD of Mycobacterium tuberculosis (strain CDC 1551 / Oshkosh).